Consider the following 321-residue polypeptide: Ribosomal RNA small subunit methyltransferase H (321 aa).

S-adenosyl-L-methionine-binding positions include 34–36, Asp54, Phe80, Asp102, and Gln109; that span reads GGH.

Belongs to the methyltransferase superfamily. RsmH family.

The protein localises to the cytoplasm. The enzyme catalyses cytidine(1402) in 16S rRNA + S-adenosyl-L-methionine = N(4)-methylcytidine(1402) in 16S rRNA + S-adenosyl-L-homocysteine + H(+). Specifically methylates the N4 position of cytidine in position 1402 (C1402) of 16S rRNA. This is Ribosomal RNA small subunit methyltransferase H from Blochmanniella floridana.